The following is a 185-amino-acid chain: CDP-diacylglycerol--glycerol-3-phosphate 3-phosphatidyltransferase (185 aa).

4 helical membrane passes run 7–26 (IFLT…AFYL), 33–52 (FITT…DGYL), 89–108 (FWIT…ISAL), and 151–172 (IAAI…IQYL).

It belongs to the CDP-alcohol phosphatidyltransferase class-I family.

It is found in the cell membrane. The enzyme catalyses a CDP-1,2-diacyl-sn-glycerol + sn-glycerol 3-phosphate = a 1,2-diacyl-sn-glycero-3-phospho-(1'-sn-glycero-3'-phosphate) + CMP + H(+). It functions in the pathway phospholipid metabolism; phosphatidylglycerol biosynthesis; phosphatidylglycerol from CDP-diacylglycerol: step 1/2. Functionally, this protein catalyzes the committed step to the synthesis of the acidic phospholipids. The polypeptide is CDP-diacylglycerol--glycerol-3-phosphate 3-phosphatidyltransferase (pgsA) (Haemophilus influenzae (strain ATCC 51907 / DSM 11121 / KW20 / Rd)).